Consider the following 502-residue polypeptide: Maturase K (502 aa).

The protein belongs to the intron maturase 2 family. MatK subfamily.

The protein localises to the plastid. It localises to the chloroplast. In terms of biological role, usually encoded in the trnK tRNA gene intron. Probably assists in splicing its own and other chloroplast group II introns. The polypeptide is Maturase K (Vitis vinifera (Grape)).